Here is an 81-residue protein sequence, read N- to C-terminus: ATP synthase subunit c, chloroplastic (81 aa).

The next 2 helical transmembrane spans lie at 3 to 23 (PLIA…ASIG) and 57 to 77 (LAFM…LLFA).

Belongs to the ATPase C chain family. In terms of assembly, F-type ATPases have 2 components, F(1) - the catalytic core - and F(0) - the membrane proton channel. F(1) has five subunits: alpha(3), beta(3), gamma(1), delta(1), epsilon(1). F(0) has four main subunits: a(1), b(1), b'(1) and c(10-14). The alpha and beta chains form an alternating ring which encloses part of the gamma chain. F(1) is attached to F(0) by a central stalk formed by the gamma and epsilon chains, while a peripheral stalk is formed by the delta, b and b' chains.

Its subcellular location is the plastid. It is found in the chloroplast thylakoid membrane. Functionally, f(1)F(0) ATP synthase produces ATP from ADP in the presence of a proton or sodium gradient. F-type ATPases consist of two structural domains, F(1) containing the extramembraneous catalytic core and F(0) containing the membrane proton channel, linked together by a central stalk and a peripheral stalk. During catalysis, ATP synthesis in the catalytic domain of F(1) is coupled via a rotary mechanism of the central stalk subunits to proton translocation. In terms of biological role, key component of the F(0) channel; it plays a direct role in translocation across the membrane. A homomeric c-ring of between 10-14 subunits forms the central stalk rotor element with the F(1) delta and epsilon subunits. The polypeptide is ATP synthase subunit c, chloroplastic (Chaetosphaeridium globosum (Charophycean green alga)).